We begin with the raw amino-acid sequence, 188 residues long: dCTP deaminase (188 aa).

Residues lysine 111–arginine 116, threonine 135–glutamate 137, glutamine 156, tyrosine 170, and glutamine 180 each bind dCTP. Residue glutamate 137 is the Proton donor/acceptor of the active site.

The protein belongs to the dCTP deaminase family. Homotrimer.

It catalyses the reaction dCTP + H2O + H(+) = dUTP + NH4(+). Its pathway is pyrimidine metabolism; dUMP biosynthesis; dUMP from dCTP (dUTP route): step 1/2. Catalyzes the deamination of dCTP to dUTP. In Nitrosomonas europaea (strain ATCC 19718 / CIP 103999 / KCTC 2705 / NBRC 14298), this protein is dCTP deaminase.